Here is a 368-residue protein sequence, read N- to C-terminus: Methylthioribose-1-phosphate isomerase (368 aa).

Residues 54–56 (RGA), R91, and Q204 each bind substrate. D245 acts as the Proton donor in catalysis. Residue 255 to 256 (NK) participates in substrate binding.

The protein belongs to the eIF-2B alpha/beta/delta subunits family. MtnA subfamily.

It carries out the reaction 5-(methylsulfanyl)-alpha-D-ribose 1-phosphate = 5-(methylsulfanyl)-D-ribulose 1-phosphate. It functions in the pathway amino-acid biosynthesis; L-methionine biosynthesis via salvage pathway; L-methionine from S-methyl-5-thio-alpha-D-ribose 1-phosphate: step 1/6. Catalyzes the interconversion of methylthioribose-1-phosphate (MTR-1-P) into methylthioribulose-1-phosphate (MTRu-1-P). In Gluconobacter oxydans (strain 621H) (Gluconobacter suboxydans), this protein is Methylthioribose-1-phosphate isomerase.